A 198-amino-acid polypeptide reads, in one-letter code: Ribonuclease HII 1 (198 aa).

One can recognise an RNase H type-2 domain in the interval 7–196; it reads ELTAGVDEAG…VRAALARAAA (190 aa). Positions 13, 14, and 105 each coordinate a divalent metal cation.

Belongs to the RNase HII family. The cofactor is Mn(2+). Mg(2+) is required as a cofactor.

The protein localises to the cytoplasm. It carries out the reaction Endonucleolytic cleavage to 5'-phosphomonoester.. Endonuclease that specifically degrades the RNA of RNA-DNA hybrids. This Methylibium petroleiphilum (strain ATCC BAA-1232 / LMG 22953 / PM1) protein is Ribonuclease HII 1.